Here is a 676-residue protein sequence, read N- to C-terminus: Symportin 1 (676 aa).

Positions 1–10 (MGKTRRNRVR) are enriched in basic residues. Residues 1–28 (MGKTRRNRVRNRTDPIAKPVKPPTDPEL) form a disordered region. The ARM 1 repeat unit spans residues 183–216 (TILRLLFRLISADIAPQDIYEEAISCLTTLSEDN). Residues 325–385 (KGNQGSRESP…EDDEDDDDDS (61 aa)) are disordered. Composition is skewed to acidic residues over residues 338–354 (ADEE…DAMD) and 363–385 (EDQE…DDDS). One copy of the ARM 2 repeat lies at 420 to 453 (TAVPQLIRLSNLPIDSDESLTIQSHALSALNNIS).

This sequence belongs to the nuclear import and ribosome assembly adapter family. Component of a hexameric 5S RNP precursor complex, composed of 5S RNA, RRS1, RPF2, RPL5, RPL11 and SYO1; this complex acts as a precursor for ribosome assembly.

Involved in ribosomal large subunit assembly. The chain is Symportin 1 from Chaetomium thermophilum (strain DSM 1495 / CBS 144.50 / IMI 039719) (Thermochaetoides thermophila).